Here is a 313-residue protein sequence, read N- to C-terminus: 2-oxoglutarate-dependent dioxygenase eupC (313 aa).

The Fe2OG dioxygenase domain maps to proline 187–glycine 284. Residues histidine 212, aspartate 214, and histidine 263 each contribute to the Fe cation site. Lysine 274 lines the 2-oxoglutarate pocket.

The protein belongs to the iron/ascorbate-dependent oxidoreductase family. The cofactor is Fe(2+).

Its pathway is secondary metabolite biosynthesis; terpenoid biosynthesis. 2-oxoglutarate-dependent dioxygenase; part of the gene cluster that mediates the biosynthesis of eupenifeldin, a bistropolone meroterpenoid that acts as an antitumor agent. The first step of eupenifeldin biosynthesis is the biosynthesis of 3-methylorcinaldehyde performed by the non-reducing polyketide synthase eupA. Oxidative dearomatization of 3-methylorcinaldehyde likely catalyzed by the FAD-dependent monooxygenase eupB is followed by oxidative ring expansion by the 2-oxoglutarate-dependent dioxygenase eupC to provide the first tropolone metabolite, tropolone stipitaldehyde. In parallel, generation of sesquiterpene alpha-humulene from farnesylpyrophosphate (FPP) is catalyzed by the terpene cyclase eupE. The cytochrome P450 monooxygenase eupD then hydroxylates humulene to humulenol. The putative Diels-Alderase eupF probably catalyzes the formation of the tropolone-humulene skeleton by linking humulenol and the polyketide moiety. The short-chain dehydrogenase/reductase eupG and the flavin-dependent monooxygenase eupH are also essential for eupenifeldin biosynthesis and are likely the additional decorating enzymes of the tropolone-humulene skeleton to produce final eupenifeldin or derivatives. The sequence is that of 2-oxoglutarate-dependent dioxygenase eupC from Phoma sp.